Consider the following 434-residue polypeptide: ATP-dependent protease ATPase subunit HslU (434 aa).

ATP contacts are provided by residues Val-18, 60-65, Asp-247, Glu-312, and Arg-384; that span reads GVGKTE.

It belongs to the ClpX chaperone family. HslU subfamily. In terms of assembly, a double ring-shaped homohexamer of HslV is capped on each side by a ring-shaped HslU homohexamer. The assembly of the HslU/HslV complex is dependent on binding of ATP.

It localises to the cytoplasm. In terms of biological role, ATPase subunit of a proteasome-like degradation complex; this subunit has chaperone activity. The binding of ATP and its subsequent hydrolysis by HslU are essential for unfolding of protein substrates subsequently hydrolyzed by HslV. HslU recognizes the N-terminal part of its protein substrates and unfolds these before they are guided to HslV for hydrolysis. This Hyphomonas neptunium (strain ATCC 15444) protein is ATP-dependent protease ATPase subunit HslU.